Reading from the N-terminus, the 124-residue chain is Small ribosomal subunit protein uS12 (124 aa).

This sequence belongs to the universal ribosomal protein uS12 family. Part of the 30S ribosomal subunit. Contacts proteins S8 and S17. May interact with IF1 in the 30S initiation complex.

Functionally, with S4 and S5 plays an important role in translational accuracy. Its function is as follows. Interacts with and stabilizes bases of the 16S rRNA that are involved in tRNA selection in the A site and with the mRNA backbone. Located at the interface of the 30S and 50S subunits, it traverses the body of the 30S subunit contacting proteins on the other side and probably holding the rRNA structure together. The combined cluster of proteins S8, S12 and S17 appears to hold together the shoulder and platform of the 30S subunit. The protein is Small ribosomal subunit protein uS12 of Photorhabdus laumondii subsp. laumondii (strain DSM 15139 / CIP 105565 / TT01) (Photorhabdus luminescens subsp. laumondii).